Here is a 476-residue protein sequence, read N- to C-terminus: Ribulose bisphosphate carboxylase large chain (476 aa).

A propeptide spanning residues 1-2 (MS) is cleaved from the precursor. The residue at position 3 (P3) is an N-acetylproline. An N6,N6,N6-trimethyllysine modification is found at K14. Residues N123 and T173 each contribute to the substrate site. K175 acts as the Proton acceptor in catalysis. Substrate is bound at residue K177. Mg(2+)-binding residues include K201, D203, and E204. N6-carboxylysine is present on K201. The active-site Proton acceptor is the H294. Substrate is bound by residues R295, H327, and S379.

It belongs to the RuBisCO large chain family. Type I subfamily. As to quaternary structure, heterohexadecamer of 8 large chains and 8 small chains; disulfide-linked. The disulfide link is formed within the large subunit homodimers. Mg(2+) serves as cofactor. Post-translationally, the disulfide bond which can form in the large chain dimeric partners within the hexadecamer appears to be associated with oxidative stress and protein turnover.

Its subcellular location is the plastid. The protein resides in the chloroplast. It carries out the reaction 2 (2R)-3-phosphoglycerate + 2 H(+) = D-ribulose 1,5-bisphosphate + CO2 + H2O. The enzyme catalyses D-ribulose 1,5-bisphosphate + O2 = 2-phosphoglycolate + (2R)-3-phosphoglycerate + 2 H(+). Functionally, ruBisCO catalyzes two reactions: the carboxylation of D-ribulose 1,5-bisphosphate, the primary event in carbon dioxide fixation, as well as the oxidative fragmentation of the pentose substrate in the photorespiration process. Both reactions occur simultaneously and in competition at the same active site. This chain is Ribulose bisphosphate carboxylase large chain, found in Liriodendron tulipifera (Tuliptree).